A 154-amino-acid chain; its full sequence is Myoglobin (154 aa).

The region spanning G2 to K148 is the Globin domain. H65 lines the nitrite pocket. H65 is an O2 binding site. H94 lines the heme b pocket.

Belongs to the globin family. As to quaternary structure, monomeric.

The protein resides in the cytoplasm. It is found in the sarcoplasm. The enzyme catalyses Fe(III)-heme b-[protein] + nitric oxide + H2O = Fe(II)-heme b-[protein] + nitrite + 2 H(+). It catalyses the reaction H2O2 + AH2 = A + 2 H2O. Monomeric heme protein which primary function is to store oxygen and facilitate its diffusion within muscle tissues. Reversibly binds oxygen through a pentacoordinated heme iron and enables its timely and efficient release as needed during periods of heightened demand. Depending on the oxidative conditions of tissues and cells, and in addition to its ability to bind oxygen, it also has a nitrite reductase activity whereby it regulates the production of bioactive nitric oxide. Under stress conditions, like hypoxia and anoxia, it also protects cells against reactive oxygen species thanks to its pseudoperoxidase activity. This Gallus gallus (Chicken) protein is Myoglobin (MB).